A 302-amino-acid chain; its full sequence is Sulfate adenylyltransferase subunit 2 (302 aa).

This sequence belongs to the PAPS reductase family. CysD subfamily. In terms of assembly, heterodimer composed of CysD, the smaller subunit, and CysN.

It catalyses the reaction sulfate + ATP + H(+) = adenosine 5'-phosphosulfate + diphosphate. It functions in the pathway sulfur metabolism; hydrogen sulfide biosynthesis; sulfite from sulfate: step 1/3. Functionally, with CysN forms the ATP sulfurylase (ATPS) that catalyzes the adenylation of sulfate producing adenosine 5'-phosphosulfate (APS) and diphosphate, the first enzymatic step in sulfur assimilation pathway. APS synthesis involves the formation of a high-energy phosphoric-sulfuric acid anhydride bond driven by GTP hydrolysis by CysN coupled to ATP hydrolysis by CysD. This Escherichia coli O157:H7 (strain EC4115 / EHEC) protein is Sulfate adenylyltransferase subunit 2.